The primary structure comprises 235 residues: Protein GrpE (235 aa).

The span at 1–18 (MTDGNQKPDGNSGEQVTV) shows a compositional bias: polar residues. 2 disordered regions span residues 1–50 (MTDG…DAAH) and 198–235 (ESVD…PSGS). A compositionally biased stretch (basic and acidic residues) spans 19–35 (TDKRRIDPETGEVRHVP).

The protein belongs to the GrpE family. In terms of assembly, homodimer.

It localises to the cytoplasm. Participates actively in the response to hyperosmotic and heat shock by preventing the aggregation of stress-denatured proteins, in association with DnaK and GrpE. It is the nucleotide exchange factor for DnaK and may function as a thermosensor. Unfolded proteins bind initially to DnaJ; upon interaction with the DnaJ-bound protein, DnaK hydrolyzes its bound ATP, resulting in the formation of a stable complex. GrpE releases ADP from DnaK; ATP binding to DnaK triggers the release of the substrate protein, thus completing the reaction cycle. Several rounds of ATP-dependent interactions between DnaJ, DnaK and GrpE are required for fully efficient folding. The sequence is that of Protein GrpE from Mycobacterium bovis (strain BCG / Pasteur 1173P2).